The chain runs to 338 residues: Anthocyanidin reductase ((2S)-flavan-3-ol-forming) (338 aa).

NADP(+) contacts are provided by residues Thr18–Val21, Lys48, Val87–Pro90, and Tyr168.

This sequence belongs to the NAD(P)-dependent epimerase/dehydratase family. Dihydroflavonol-4-reductase subfamily. As to expression, expressed in leaves and grape berries.

The catalysed reaction is a (2S,3R)-flavan-3-ol + 2 NADP(+) = an anthocyanidin with a 3-hydroxy group + 2 NADPH + 2 H(+). The enzyme catalyses a (2S,3S)-flavan-3-ol + 2 NADP(+) = an anthocyanidin with a 3-hydroxy group + 2 NADPH + 2 H(+). Its pathway is secondary metabolite biosynthesis; flavonoid biosynthesis. Functionally, produces the terminal flavan-3-ol monomers required for the formation of proanthocyanidins or condensed tannins in leaves and flowers, as well as in the skin and seeds of developing berries. Behaves as a reductase and as a C-3 epimerase. Catalyzes the double reduction of anthocyanidins, producing a mixture of (2S,3S)- and (2S,3R)-flavan-3-ols. The enzyme catalyzes sequential hydride transfers to C-2 and C-4, respectively and epimerization at C-3 is achieved by tautomerization that occurs between the two hydride transfers. Converts cyanidin, pelargonidin and delphinidin into catechin and epicatechin, afzelechin and epiafzelechin, and gallocatechin and epigallocatechin respectively. In Vitis vinifera (Grape), this protein is Anthocyanidin reductase ((2S)-flavan-3-ol-forming).